The chain runs to 918 residues: Glutamate receptor ionotropic, kainate 1 (918 aa).

A signal peptide spans 1–30; sequence MEHGTLLAQPGLWTRDTSWALLYFLCYILP. At 31-576 the chain is on the extracellular side; the sequence is QTAPQVLRIG…VFSFLNPLSP (546 aa). N-linked (GlcNAc...) asparagine glycosylation is found at asparagine 68, asparagine 74, asparagine 276, asparagine 379, asparagine 428, asparagine 439, and asparagine 446. The L-glutamate site is built by proline 531, threonine 533, and arginine 538. An N-linked (GlcNAc...) asparagine glycan is attached at asparagine 561. The chain crosses the membrane as a helical span at residues 577 to 597; sequence DIWMYVLLACLGVSCVLFVIA. Residues 598–653 are Cytoplasmic-facing; that stretch reads RFTPYEWYNPHPCNPDSDVVENNFTLLNSFWFGVGALMQQGSELMPKALSTRIVGG. The chain crosses the membrane as a helical span at residues 654–674; sequence IWWFFTLIIISSYTANLAAFL. At 675–834 the chain is on the extracellular side; the sequence is TVERMESPID…KEASALGVEN (160 aa). The L-glutamate site is built by serine 704 and threonine 705. Serine 725 bears the Phosphoserine; by PKC mark. Glutamate 753 serves as a coordination point for L-glutamate. Threonine 761 is modified (phosphothreonine; by PKC). Residues cysteine 765 and cysteine 819 are joined by a disulfide bond. N-linked (GlcNAc...) asparagine glycosylation is present at asparagine 766. The helical transmembrane segment at 835–855 threads the bilayer; the sequence is IGGIFIVLAAGLVLSVFVAIG. Over 856-918 the chain is Cytoplasmic; sequence EFIYKSRKNN…IRKQSSVHTV (63 aa).

The protein belongs to the glutamate-gated ion channel (TC 1.A.10.1) family. GRIK1 subfamily. Homotetramer or heterotetramer of pore-forming glutamate receptor subunits. Tetramers may be formed by the dimerization of dimers. Can form functional heteromeric receptors with GRIK5. Can form functional heteromeric receptors with GRIK4. Interacts with KLHL17.

The protein localises to the cell membrane. The protein resides in the postsynaptic cell membrane. The catalysed reaction is Ca(2+)(in) = Ca(2+)(out). Its function is as follows. Ionotropic glutamate receptor that functions as a cation-permeable ligand-gated ion channel, gated by L-glutamate and the glutamatergic agonist kainic acid. L-glutamate acts as an excitatory neurotransmitter at many synapses in the central nervous system. Binding of the excitatory neurotransmitter L-glutamate induces a conformation change, leading to the opening of the cation channel, and thereby converts the chemical signal to an electrical impulse. The receptor then desensitizes rapidly and enters a transient inactive state, characterized by the presence of bound agonist. Ionotropic glutamate receptor that functions as a cation-permeable ligand-gated ion channel, gated by L-glutamate and the glutamatergic agonist kainic acid. This is Glutamate receptor ionotropic, kainate 1 (GRIK1) from Homo sapiens (Human).